The sequence spans 186 residues: Dirigent protein 7 (186 aa).

The N-terminal stretch at Met1–Ala21 is a signal peptide. N-linked (GlcNAc...) asparagine glycosylation is found at Asn70, Asn91, and Asn126.

Belongs to the plant dirigent protein family. Homodimer.

The protein localises to the secreted. It localises to the extracellular space. Its subcellular location is the apoplast. In terms of biological role, dirigent proteins impart stereoselectivity on the phenoxy radical-coupling reaction, yielding optically active lignans from two molecules of coniferyl alcohol in the biosynthesis of lignans, flavonolignans, and alkaloids and thus plays a central role in plant secondary metabolism. This is Dirigent protein 7 (DIR7) from Arabidopsis thaliana (Mouse-ear cress).